An 89-amino-acid polypeptide reads, in one-letter code: Small ribosomal subunit protein uS15 (89 aa).

This sequence belongs to the universal ribosomal protein uS15 family. In terms of assembly, part of the 30S ribosomal subunit. Forms a bridge to the 50S subunit in the 70S ribosome, contacting the 23S rRNA.

Its function is as follows. One of the primary rRNA binding proteins, it binds directly to 16S rRNA where it helps nucleate assembly of the platform of the 30S subunit by binding and bridging several RNA helices of the 16S rRNA. Forms an intersubunit bridge (bridge B4) with the 23S rRNA of the 50S subunit in the ribosome. In Chromobacterium violaceum (strain ATCC 12472 / DSM 30191 / JCM 1249 / CCUG 213 / NBRC 12614 / NCIMB 9131 / NCTC 9757 / MK), this protein is Small ribosomal subunit protein uS15.